The following is a 152-amino-acid chain: 6,7-dimethyl-8-ribityllumazine synthase (152 aa).

5-amino-6-(D-ribitylamino)uracil-binding positions include Phe-22, 54–56 (AFE), and 78–80 (AVI). A (2S)-2-hydroxy-3-oxobutyl phosphate-binding site is contributed by 83-84 (ET). Catalysis depends on His-86, which acts as the Proton donor. Phe-111 serves as a coordination point for 5-amino-6-(D-ribitylamino)uracil. Arg-125 serves as a coordination point for (2S)-2-hydroxy-3-oxobutyl phosphate.

This sequence belongs to the DMRL synthase family.

The enzyme catalyses (2S)-2-hydroxy-3-oxobutyl phosphate + 5-amino-6-(D-ribitylamino)uracil = 6,7-dimethyl-8-(1-D-ribityl)lumazine + phosphate + 2 H2O + H(+). Its pathway is cofactor biosynthesis; riboflavin biosynthesis; riboflavin from 2-hydroxy-3-oxobutyl phosphate and 5-amino-6-(D-ribitylamino)uracil: step 1/2. Catalyzes the formation of 6,7-dimethyl-8-ribityllumazine by condensation of 5-amino-6-(D-ribitylamino)uracil with 3,4-dihydroxy-2-butanone 4-phosphate. This is the penultimate step in the biosynthesis of riboflavin. This is 6,7-dimethyl-8-ribityllumazine synthase from Limosilactobacillus reuteri (strain DSM 20016) (Lactobacillus reuteri).